Consider the following 253-residue polypeptide: Histone H1.4 (253 aa).

Residues 1–33 (MSDVAVAADTTETPAAPTKASKATKASKATKAS) are compositionally biased toward low complexity. Residues 1 to 43 (MSDVAVAADTTETPAAPTKASKATKASKATKASKATKAKTTKV) form a disordered region. Serine 2 is subject to N-acetylserine. Residues 51–127 (AHPPFINMVT…GANGRFRLAE (77 aa)) form the H15 domain. Residues 134-253 (KSPAAAKKDA…KKAPAAAPEA (120 aa)) are disordered. Composition is skewed to basic and acidic residues over residues 139–149 (AKKDATGEKKA) and 188–200 (AAGD…EVKV). Basic residues-rich tracts occupy residues 201–210 (KKVKSPKKIA) and 234–244 (APKKAAAKPAK).

This sequence belongs to the histone H1/H5 family.

The protein resides in the nucleus. The protein localises to the chromosome. In terms of biological role, histones H1 are necessary for the condensation of nucleosome chains into higher-order structures. This Caenorhabditis elegans protein is Histone H1.4 (hil-4).